The following is a 224-amino-acid chain: Ribonuclease HII (224 aa).

An RNase H type-2 domain is found at 7-217 (STIMGIDEAG…SNAVIADCLQ (211 aa)). D13, E14, and D111 together coordinate a divalent metal cation.

The protein belongs to the RNase HII family. Requires Mn(2+) as cofactor. Mg(2+) is required as a cofactor.

The protein resides in the cytoplasm. The catalysed reaction is Endonucleolytic cleavage to 5'-phosphomonoester.. In terms of biological role, endonuclease that specifically degrades the RNA of RNA-DNA hybrids. This Methanocella arvoryzae (strain DSM 22066 / NBRC 105507 / MRE50) protein is Ribonuclease HII.